A 501-amino-acid chain; its full sequence is Cryptochrome-1 (501 aa).

The 130-residue stretch at 5–134 folds into the Photolyase/cryptochrome alpha/beta domain; sequence KKTIVWFRRD…SVQSYNGDLC (130 aa). FAD contacts are provided by residues Y231 and 243-247; that span reads TSLLS. R356 is a binding site for ATP. The FAD site is built by D386 and D388. D405 provides a ligand contact to ATP.

The protein belongs to the DNA photolyase class-1 family. Homodimer. Requires FAD as cofactor. (6R)-5,10-methylene-5,6,7,8-tetrahydrofolate is required as a cofactor.

In terms of biological role, mediates blue light-induced gene expression in addition to its role in blue light-dependent inhibition of stem growth. In Sinapis alba (White mustard), this protein is Cryptochrome-1 (PHR1).